Consider the following 205-residue polypeptide: MSSIYEKSIINYHLLHPKLQKRYQLDGSHTFSGTGTMSEISGGSFLVRMLLKLGVFFRCFFSERGKDIPFTIQNRTCLLKSQHTGIEWNRTFFFKGKKRFFDALMIYDEKENRILDFFGKPHLLLSVLTFEASLDGSLTITSGKQWLLICGKRIPLPKWLTGTSEVCETFDEKKNCFTIEVHVQNTILGTLFFYKGTFQEEERES.

This is an uncharacterized protein from Bacillus subtilis (strain 168).